Here is a 176-residue protein sequence, read N- to C-terminus: Cytochrome b (176 aa).

The next 3 membrane-spanning stretches (helical) occupy residues 33 to 53 (FGSLLGICLALQILTGLFLAM), 77 to 98 (WILRYLHANGASMFFICLYLHV), and 113 to 133 (WNIGVTPLFAVMATAFMGYVL). The heme b site is built by H83 and H97.

Belongs to the cytochrome b family. The cytochrome bc1 complex contains 11 subunits: 3 respiratory subunits (MT-CYB, CYC1 and UQCRFS1), 2 core proteins (UQCRC1 and UQCRC2) and 6 low-molecular weight proteins (UQCRH/QCR6, UQCRB/QCR7, UQCRQ/QCR8, UQCR10/QCR9, UQCR11/QCR10 and a cleavage product of UQCRFS1). This cytochrome bc1 complex then forms a dimer. Heme b serves as cofactor.

Its subcellular location is the mitochondrion inner membrane. Its function is as follows. Component of the ubiquinol-cytochrome c reductase complex (complex III or cytochrome b-c1 complex) that is part of the mitochondrial respiratory chain. The b-c1 complex mediates electron transfer from ubiquinol to cytochrome c. Contributes to the generation of a proton gradient across the mitochondrial membrane that is then used for ATP synthesis. In Myotis leibii (Eastern small-footed myotis), this protein is Cytochrome b (MT-CYB).